Here is a 708-residue protein sequence, read N- to C-terminus: E3 ubiquitin-protein ligase RNF169 (708 aa).

Low complexity-rich tracts occupy residues 1–20 (MAAA…AALS) and 33–53 (AAKT…LSPP). Disordered regions lie at residues 1–71 (MAAA…CAGC), 96–169 (ADAA…EPDF), and 195–262 (EEKL…MTQT). Serine 12 is modified (phosphoserine). An RING-type zinc finger spans residues 68 to 107 (CAGCLEPPGEAAALPCGHSLCRGCAQRAADAAGPGCPRCR). Positions 132–147 (CARRSQPERCRPRRDG) are enriched in basic and acidic residues. Low complexity predominate over residues 148–167 (GAAAAGPRPEQEPRAAPAEP). Positions 195 to 243 (EEKLQEEKPSEDQIHKLLPEDTETGKRKMDEQKKRDEPLVLKTNLERCP) are enriched in basic and acidic residues. The short motif at 205-213 (EDQIHKLLP) is the UMI motif element. Serine 247 and serine 249 each carry phosphoserine. Residue lysine 286 forms a Glycyl lysine isopeptide (Lys-Gly) (interchain with G-Cter in SUMO2) linkage. Serine 339 carries the post-translational modification Phosphoserine. Lysine 362 participates in a covalent cross-link: Glycyl lysine isopeptide (Lys-Gly) (interchain with G-Cter in SUMO2). 3 positions are modified to phosphoserine: serine 368, serine 403, and serine 409. Threonine 410 bears the Phosphothreonine mark. Serine 485 is subject to Phosphoserine. The disordered stretch occupies residues 491 to 555 (SEYTGPTSAD…EQFEGLGSTP (65 aa)). A Glycyl lysine isopeptide (Lys-Gly) (interchain with G-Cter in SUMO2) cross-link involves residue lysine 511. Phosphothreonine is present on threonine 554. Serine 644 is subject to Phosphoserine. The MIU motif signature appears at 665–682 (QEEEDRQLALQLQRMFDN). The LR motif signature appears at 689 to 701 (RRKGSVDQYLLRS). Phosphoserine is present on serine 693.

Belongs to the RNF169 family. In terms of assembly, interacts with DYRK1B. Post-translationally, phosphorylated by DYRK1A; phosphorylation increases RNF169 ability to block accumulation of TP53BP1 at the DSB sites.

The protein resides in the chromosome. The protein localises to the nucleus. It is found in the nucleoplasm. It carries out the reaction S-ubiquitinyl-[E2 ubiquitin-conjugating enzyme]-L-cysteine + [acceptor protein]-L-lysine = [E2 ubiquitin-conjugating enzyme]-L-cysteine + N(6)-ubiquitinyl-[acceptor protein]-L-lysine.. Its pathway is protein modification; protein ubiquitination. Its function is as follows. Probable E3 ubiquitin-protein ligase that acts as a regulator of double-strand breaks (DSBs) repair following DNA damage. Functions in a non-canonical fashion to harness RNF168-mediated protein recruitment to DSB-containing chromatin, thereby contributing to regulation of DSB repair pathway utilization. Once recruited to DSB repair sites by recognizing and binding ubiquitin catalyzed by RNF168, competes with TP53BP1 and BRCA1 for association with RNF168-modified chromatin, thereby favouring homologous recombination repair (HRR) and single-strand annealing (SSA) instead of non-homologous end joining (NHEJ) mediated by TP53BP1. E3 ubiquitin-protein ligase activity is not required for regulation of DSBs repair. This is E3 ubiquitin-protein ligase RNF169 (RNF169) from Homo sapiens (Human).